A 450-amino-acid chain; its full sequence is Coiled-coil domain-containing protein 149-A (450 aa).

Coiled coils occupy residues 1-197 (MANQ…DRRK) and 259-286 (IQHQ…LEIS). The segment at 290–358 (SLPDDRTGRG…NGQVGTQLKE (69 aa)) is disordered. The segment covering 343 to 354 (PSGTRTNGQVGT) has biased composition (polar residues).

The protein belongs to the CCDC149 family.

This is Coiled-coil domain-containing protein 149-A (ccdc149a) from Danio rerio (Zebrafish).